Consider the following 1196-residue polypeptide: Cingulin (1196 aa).

The head stretch occupies residues 7–354 (MAEPRGPVDH…LVMTSGSAKG (348 aa)). The short motif at 48–62 (ANTYGVAVRVQGIAG) is the ZIM element. Positions 54–67 (AVRVQGIAGQPFVV) are interaction with TJP1/ZO1. The interval 82-105 (IKGTNNRGPPGALSSDSELPESTY) is disordered. Phosphoserine occurs at positions 95, 96, 98, 135, 137, 140, 155, 165, and 214. A compositionally biased stretch (polar residues) spans 95 to 105 (SSDSELPESTY). Residues 183–263 (NKFDSRQGGQ…NQGPLGGFSC (81 aa)) are disordered. Residues 218–231 (RLPRDTLDEREHQF) show a composition bias toward basic and acidic residues. Over residues 245 to 256 (MGNSKQSSQNQG) the composition is skewed to polar residues. Phosphoserine is present on Ser274. Positions 355–1150 (LTGQSELSQK…ARIKTLEKDS (796 aa)) form a coiled coil. Lys576 bears the N6-acetyllysine mark. Over residues 884–897 (AQRQAKEWATEAEK) the composition is skewed to basic and acidic residues. 3 disordered regions span residues 884-906 (AQRQ…SRLQ), 1023-1061 (DLKS…EERE), and 1149-1174 (DSWR…EEFD). The segment covering 1038–1050 (SASLSQLESQNQE) has biased composition (low complexity). Over residues 1051–1061 (LQERLQAEERE) the composition is skewed to basic and acidic residues. The interval 1155–1196 (SRSAAESAQREGLSSDEEFDSVYDPSSIASLLTESNLQTSSC) is tail. A phosphoserine mark is found at Ser1168, Ser1169, and Ser1175.

The protein belongs to the cingulin family. Homodimer. Interacts with TJP1/ZO1 and SPEF1.

It localises to the cell junction. The protein resides in the tight junction. In terms of biological role, probably plays a role in the formation and regulation of the tight junction (TJ) paracellular permeability barrier. In Canis lupus familiaris (Dog), this protein is Cingulin.